The sequence spans 136 residues: Translation initiation factor 5A (136 aa).

Lys-37 is subject to Hypusine.

Belongs to the eIF-5A family.

The protein resides in the cytoplasm. Functions by promoting the formation of the first peptide bond. The protein is Translation initiation factor 5A (eIF5A) of Thermococcus gammatolerans (strain DSM 15229 / JCM 11827 / EJ3).